Reading from the N-terminus, the 295-residue chain is Protease HtpX (295 aa).

A run of 2 helical transmembrane segments spans residues 4–24 and 41–61; these read ILLF…TLSL and SQLL…SLFI. Position 147 (histidine 147) interacts with Zn(2+). Residue glutamate 148 is part of the active site. Residue histidine 151 participates in Zn(2+) binding. Transmembrane regions (helical) follow at residues 158–178 and 199–219; these read VTLA…ARII and IATI…VMWF. Glutamate 224 is a binding site for Zn(2+).

Belongs to the peptidase M48B family. The cofactor is Zn(2+).

The protein resides in the cell inner membrane. In Pseudomonas fluorescens (strain Pf0-1), this protein is Protease HtpX.